We begin with the raw amino-acid sequence, 65 residues long: Large ribosomal subunit protein bL35 (65 aa).

Residues 20–42 form a disordered region; it reads GKVRRHHANASHIMTTKTTKRKR.

It belongs to the bacterial ribosomal protein bL35 family.

The chain is Large ribosomal subunit protein bL35 from Syntrophus aciditrophicus (strain SB).